A 688-amino-acid polypeptide reads, in one-letter code: Potassium-transporting ATPase ATP-binding subunit (688 aa).

Transmembrane regions (helical) follow at residues 37–57, 65–85, 219–239, and 262–282; these read FIVYIASILTTVLYVFSLFGI, ILFISILLWFTVLFANFAEAI, IALQILLVSLTIIFLVVTASL, and LALLVCLAPTTIGALLSAIGI. D313 acts as the 4-aspartylphosphate intermediate in catalysis. Residues D350, E354, 383–390, and K401 each bind ATP; that span reads FTAKTRMS. 2 residues coordinate Mg(2+): D524 and D528. Transmembrane regions (helical) follow at residues 586-606, 622-642, and 668-688; these read IANDIAKYFAIIPPLFIGLFP, AILSAVIYNAFIIIFLIPLAL, and IIAPFIAIKGIDILITMLGIV.

It belongs to the cation transport ATPase (P-type) (TC 3.A.3) family. Type IA subfamily. The system is composed of three essential subunits: KdpA, KdpB and KdpC.

It is found in the cell membrane. It carries out the reaction K(+)(out) + ATP + H2O = K(+)(in) + ADP + phosphate + H(+). In terms of biological role, part of the high-affinity ATP-driven potassium transport (or Kdp) system, which catalyzes the hydrolysis of ATP coupled with the electrogenic transport of potassium into the cytoplasm. This subunit is responsible for energy coupling to the transport system and for the release of the potassium ions to the cytoplasm. This is Potassium-transporting ATPase ATP-binding subunit from Clostridium perfringens (strain ATCC 13124 / DSM 756 / JCM 1290 / NCIMB 6125 / NCTC 8237 / Type A).